We begin with the raw amino-acid sequence, 294 residues long: 4-hydroxy-tetrahydrodipicolinate synthase (294 aa).

Threonine 44 is a pyruvate binding site. Tyrosine 132 serves as the catalytic Proton donor/acceptor. Lysine 161 acts as the Schiff-base intermediate with substrate in catalysis. Isoleucine 206 serves as a coordination point for pyruvate.

It belongs to the DapA family. Homotetramer; dimer of dimers.

Its subcellular location is the cytoplasm. The catalysed reaction is L-aspartate 4-semialdehyde + pyruvate = (2S,4S)-4-hydroxy-2,3,4,5-tetrahydrodipicolinate + H2O + H(+). The protein operates within amino-acid biosynthesis; L-lysine biosynthesis via DAP pathway; (S)-tetrahydrodipicolinate from L-aspartate: step 3/4. Its function is as follows. Catalyzes the condensation of (S)-aspartate-beta-semialdehyde [(S)-ASA] and pyruvate to 4-hydroxy-tetrahydrodipicolinate (HTPA). The polypeptide is 4-hydroxy-tetrahydrodipicolinate synthase (Thermotoga sp. (strain RQ2)).